The sequence spans 667 residues: WD repeat-containing protein 48 homolog (667 aa).

WD repeat units lie at residues 26-65, 71-110, 113-152, 164-203, 206-245, 248-287, 290-329, and 349-388; these read QHRN…NDKY, HHND…CMST, THRD…ALTA, GSKD…RSMK, GHTE…CIQT, VHKE…NKML, EEKA…RCTL, and KGGA…KKEE. Residues 591-615 form a disordered region; it reads ETTPSGGNANNSLQNSQSDANSEGS.

It belongs to the WD repeat WDR48 family. As to quaternary structure, catalytic component of the Usp12-46 deubiquitylase complex consisting of Usp12-46, Wdr20 and Uaf1; regulatory subunit that, together wtih Wdr20, stabilizes Usp12-46. The Usp12-46 deubiquitylase complex associates with arr/arrow; the interaction leads to deubiquitination and stabilization of arr/arrow.

Its function is as follows. Regulatory component of the Usp12-46 deubiquitylase complex. activates deubiquitination by increasing the catalytic turnover without increasing the affinity of deubiquitinating enzymes for the substrate. The complex deubiquitylates the wg/wingless-signaling receptor arr/arrow, which stabilizes the receptor and increases its concentration at the cell surface; this enhances the sensitivity of cells to wg/wingless-signal stimulation. This increases the amplitude and spatial range of the signaling response to the wg/wingless morphogen gradient, facilitating the precise concentration-dependent regulation of its target genes. Together with Wdr20 and Usp12-46 required for wg/wingless-mediated signaling in the wing imaginal disc and for wg/wingless-dependent regulation of intestinal stem cell proliferation. This chain is WD repeat-containing protein 48 homolog, found in Drosophila virilis (Fruit fly).